We begin with the raw amino-acid sequence, 215 residues long: Pyrrolidone-carboxylate peptidase (215 aa).

Residues Glu80, Cys143, and His167 contribute to the active site.

It belongs to the peptidase C15 family. In terms of assembly, homotetramer.

The protein localises to the cytoplasm. The enzyme catalyses Release of an N-terminal pyroglutamyl group from a polypeptide, the second amino acid generally not being Pro.. Its function is as follows. Removes 5-oxoproline from various penultimate amino acid residues except L-proline. This chain is Pyrrolidone-carboxylate peptidase, found in Bacillus thuringiensis subsp. konkukian (strain 97-27).